Consider the following 1040-residue polypeptide: Multidrug resistance protein MdtB (1040 aa).

Helical transmembrane passes span 16 to 36, 347 to 367, 369 to 389, 396 to 416, 440 to 460, 472 to 492, 537 to 557, 863 to 883, 888 to 908, 911 to 931, 968 to 988, and 998 to 1018; these read FIMRPVATTLLMVAILLAGII, LMMAIALVVMIIYLFLRNIPA, IIPGVAVPLSLIGTFAVMVFL, LTLMALTIATGFVVDDAIVVI, IGFTIISLTFSLIAVLIPLLF, FAITLAVAILISAVVSLTLTP, WLTLSVALSTLLLSVLLWVFI, LGSTVWLIVAAVVAMYIVLGI, FIHPITILSTLPTAGVGALLA, IAGSELDVIAIIGIILLIGIV, ILMTTLAALLGALPLMLSTGV, and IGMVGGLIVSQVLTLFTTPVI.

It belongs to the resistance-nodulation-cell division (RND) (TC 2.A.6) family. MdtB subfamily. As to quaternary structure, part of a tripartite efflux system composed of MdtA, MdtB and MdtC. MdtB forms a heteromultimer with MdtC.

It localises to the cell inner membrane. Its function is as follows. The MdtABC tripartite complex confers resistance against novobiocin and deoxycholate. The protein is Multidrug resistance protein MdtB of Escherichia coli O7:K1 (strain IAI39 / ExPEC).